Consider the following 318-residue polypeptide: NADH-ubiquinone oxidoreductase chain 1 (318 aa).

8 consecutive transmembrane segments (helical) span residues 2–22 (FMINLLMMIVPILLAVAFLTL), 68–88 (ISMFIMAPILALTLALTMWTP), 100–120 (LGILFMLAMSSLAVYSILWSG), 146–166 (LAIILLSVLLLSGSFTLPTLI), 171–191 (HIWLIVPSWPLAMMWFISTLA), 222–242 (LFFLAEYANIIMMNIFTTILF), 253–273 (ELYTINFVTKSMLLTISFLWV), and 293–313 (FLPLTLALCMWHVTMPIITAG).

Belongs to the complex I subunit 1 family. Core subunit of respiratory chain NADH dehydrogenase (Complex I) which is composed of 45 different subunits.

The protein resides in the mitochondrion inner membrane. The catalysed reaction is a ubiquinone + NADH + 5 H(+)(in) = a ubiquinol + NAD(+) + 4 H(+)(out). Its function is as follows. Core subunit of the mitochondrial membrane respiratory chain NADH dehydrogenase (Complex I) which catalyzes electron transfer from NADH through the respiratory chain, using ubiquinone as an electron acceptor. Essential for the catalytic activity and assembly of complex I. The sequence is that of NADH-ubiquinone oxidoreductase chain 1 (MT-ND1) from Hipposideros armiger terasensis (Formosan leaf-nosed bat).